The primary structure comprises 364 residues: Ribosomal RNA large subunit methyltransferase F (364 aa).

Residues 1–17 show a composition bias toward low complexity; it reads MPKPAIKTAAKPATSSA. Positions 1-53 are disordered; sequence MPKPAIKTAAKPATSSAGKRGKPNTPKSVAKPKTAKPKTASKPKVKPGEKKRL. A compositionally biased stretch (basic residues) spans 33 to 53; the sequence is KTAKPKTASKPKVKPGEKKRL.

The protein belongs to the methyltransferase superfamily. METTL16/RlmF family.

The protein localises to the cytoplasm. It carries out the reaction adenosine(1618) in 23S rRNA + S-adenosyl-L-methionine = N(6)-methyladenosine(1618) in 23S rRNA + S-adenosyl-L-homocysteine + H(+). Its function is as follows. Specifically methylates the adenine in position 1618 of 23S rRNA. The chain is Ribosomal RNA large subunit methyltransferase F from Shewanella sp. (strain MR-7).